The chain runs to 363 residues: Nucleoporin SEH1 (363 aa).

6 WD repeats span residues 15 to 54 (AHRD…NWRR), 60 to 101 (CHGG…SEKD), 108 to 149 (QWIR…RIYE), 158 to 206 (RWNL…VIYE), 223 to 264 (DLPC…SAIL), and 287 to 326 (GDHR…QWVK).

It belongs to the WD repeat SEC13 family. As to quaternary structure, component of the nuclear pore complex (NPC). Probably part of the GATOR complex.

It localises to the nucleus. The protein localises to the nuclear pore complex. It is found in the lysosome membrane. Its subcellular location is the nucleus envelope. In terms of biological role, probable component of the nuclear pore complex (NPC) which is involved in the trafficking of macromolecules between the cytoplasm and nucleus. As a component of the GATOR complex may function in the amino acid-sensing branch of the TORC1 signaling pathway. The sequence is that of Nucleoporin SEH1 from Caenorhabditis elegans.